A 156-amino-acid polypeptide reads, in one-letter code: 6,7-dimethyl-8-ribityllumazine synthase (156 aa).

Residues Phe23, 57–59, and 81–83 each bind 5-amino-6-(D-ribitylamino)uracil; these read AFE and AVI. 86-87 is a binding site for (2S)-2-hydroxy-3-oxobutyl phosphate; sequence AT. His89 functions as the Proton donor in the catalytic mechanism. A 5-amino-6-(D-ribitylamino)uracil-binding site is contributed by Phe114. Arg128 lines the (2S)-2-hydroxy-3-oxobutyl phosphate pocket.

It belongs to the DMRL synthase family.

It catalyses the reaction (2S)-2-hydroxy-3-oxobutyl phosphate + 5-amino-6-(D-ribitylamino)uracil = 6,7-dimethyl-8-(1-D-ribityl)lumazine + phosphate + 2 H2O + H(+). It participates in cofactor biosynthesis; riboflavin biosynthesis; riboflavin from 2-hydroxy-3-oxobutyl phosphate and 5-amino-6-(D-ribitylamino)uracil: step 1/2. Catalyzes the formation of 6,7-dimethyl-8-ribityllumazine by condensation of 5-amino-6-(D-ribitylamino)uracil with 3,4-dihydroxy-2-butanone 4-phosphate. This is the penultimate step in the biosynthesis of riboflavin. The chain is 6,7-dimethyl-8-ribityllumazine synthase from Sulfurovum sp. (strain NBC37-1).